The following is a 578-amino-acid chain: Adenine deaminase (578 aa).

It belongs to the metallo-dependent hydrolases superfamily. Adenine deaminase family. Mn(2+) is required as a cofactor.

It carries out the reaction adenine + H2O + H(+) = hypoxanthine + NH4(+). The protein is Adenine deaminase of Ligilactobacillus salivarius (strain UCC118) (Lactobacillus salivarius).